The sequence spans 504 residues: Glycerol kinase (504 aa).

Thr14 lines the ADP pocket. Thr14, Thr15, and Ser16 together coordinate ATP. Residue Thr14 participates in sn-glycerol 3-phosphate binding. ADP is bound at residue Arg18. Residues Arg84, Glu85, Tyr136, and Asp246 each contribute to the sn-glycerol 3-phosphate site. 5 residues coordinate glycerol: Arg84, Glu85, Tyr136, Asp246, and Gln247. ADP is bound by residues Thr268 and Gly311. ATP is bound by residues Thr268, Gly311, Gln315, and Gly412. Residues Gly412 and Asn416 each coordinate ADP.

The protein belongs to the FGGY kinase family.

The catalysed reaction is glycerol + ATP = sn-glycerol 3-phosphate + ADP + H(+). It functions in the pathway polyol metabolism; glycerol degradation via glycerol kinase pathway; sn-glycerol 3-phosphate from glycerol: step 1/1. Its activity is regulated as follows. Inhibited by fructose 1,6-bisphosphate (FBP). Key enzyme in the regulation of glycerol uptake and metabolism. Catalyzes the phosphorylation of glycerol to yield sn-glycerol 3-phosphate. The protein is Glycerol kinase of Aliivibrio salmonicida (strain LFI1238) (Vibrio salmonicida (strain LFI1238)).